Consider the following 199-residue polypeptide: Fe/S biogenesis protein NfuA (199 aa).

Cysteine 151 and cysteine 154 together coordinate [4Fe-4S] cluster.

The protein belongs to the NfuA family. As to quaternary structure, homodimer. The cofactor is [4Fe-4S] cluster.

Functionally, involved in iron-sulfur cluster biogenesis. Binds a 4Fe-4S cluster, can transfer this cluster to apoproteins, and thereby intervenes in the maturation of Fe/S proteins. Could also act as a scaffold/chaperone for damaged Fe/S proteins. This is Fe/S biogenesis protein NfuA from Xanthomonas axonopodis pv. citri (strain 306).